The following is a 311-amino-acid chain: tRNA-cytidine(32) 2-sulfurtransferase (311 aa).

The PP-loop motif motif lies at 47-52 (SGGKDS). [4Fe-4S] cluster-binding residues include Cys122, Cys125, and Cys213.

It belongs to the TtcA family. Homodimer. It depends on Mg(2+) as a cofactor. The cofactor is [4Fe-4S] cluster.

The protein localises to the cytoplasm. It carries out the reaction cytidine(32) in tRNA + S-sulfanyl-L-cysteinyl-[cysteine desulfurase] + AH2 + ATP = 2-thiocytidine(32) in tRNA + L-cysteinyl-[cysteine desulfurase] + A + AMP + diphosphate + H(+). It functions in the pathway tRNA modification. Its function is as follows. Catalyzes the ATP-dependent 2-thiolation of cytidine in position 32 of tRNA, to form 2-thiocytidine (s(2)C32). The sulfur atoms are provided by the cysteine/cysteine desulfurase (IscS) system. The sequence is that of tRNA-cytidine(32) 2-sulfurtransferase from Shigella boydii serotype 18 (strain CDC 3083-94 / BS512).